The sequence spans 602 residues: MPSDRQRKIRNFSIIAHIDHGKSTLADRLIERTGLISQREMQAQVLDNMELERERGITIKLQSIRLIYKAKDGQDYYLNLIDTPGHVDFTYEVSRSLAACEGAILVVDAAQGIEAQTMANVYLALEQNLEIIPVINKIDLPSARPDEIKREIEDIIGLDASEAPLISAKDGLNIDDVLEAIVKNIPPPTEDEEAPLKALVFDSYYDNYKGVVAYTRVVEGTVKKGMKIRMMATKKEFEVTEVGVYSPGPIQLDQLSAGDVGYIAASIKDVRYCRVGDTITDALNPTEHSLPGYRKVTPMVYCGVYPAEGEKYEDVRDALDRLQVNDAALVFEAETSAALGFGFRCGFLGLLHMEIIQERLEREFNLDLVTTAPSVIYRVTKTNGEVVMIQNPANLPVTQEISVIEEPIVKATIMVPSEYAGIVIELCQDRRGEMKGMDYIEETRVNLHYELPLNEVIYDFFDALKSKTKGYGSLDYEMKGYKPSTLVKLDILINSEQVDALSFIVHESKAYARGKGMCEKLKDEIPRHQFPVPLQASIGTKIIARETIRALRKDVLAKCYGGDISRKKKLLEKQKKGKKRMRQVGSVEVPQKAFMSVLKLDT.

One can recognise a tr-type G domain in the interval arginine 7–threonine 189. Residues aspartate 19 to threonine 24 and asparagine 136 to aspartate 139 contribute to the GTP site.

It belongs to the TRAFAC class translation factor GTPase superfamily. Classic translation factor GTPase family. LepA subfamily.

The protein localises to the cell membrane. The catalysed reaction is GTP + H2O = GDP + phosphate + H(+). Its function is as follows. Required for accurate and efficient protein synthesis under certain stress conditions. May act as a fidelity factor of the translation reaction, by catalyzing a one-codon backward translocation of tRNAs on improperly translocated ribosomes. Back-translocation proceeds from a post-translocation (POST) complex to a pre-translocation (PRE) complex, thus giving elongation factor G a second chance to translocate the tRNAs correctly. Binds to ribosomes in a GTP-dependent manner. The protein is Elongation factor 4 of Alkaliphilus metalliredigens (strain QYMF).